Here is a 228-residue protein sequence, read N- to C-terminus: Probable septum site-determining protein MinC (228 aa).

It belongs to the MinC family. Interacts with MinD and FtsZ.

Cell division inhibitor that blocks the formation of polar Z ring septums. Rapidly oscillates between the poles of the cell to destabilize FtsZ filaments that have formed before they mature into polar Z rings. Prevents FtsZ polymerization. The chain is Probable septum site-determining protein MinC from Bacillus cereus (strain B4264).